We begin with the raw amino-acid sequence, 461 residues long: MSFRSVLLTALLSLSFTTTMQAAHHHYHRYTDKLHRQNHKKDLISPKPTEQEACNTSSLSKELIPLSEQRGLLSPICDFISERPCLHGVSVRNLKQALKNSAGTQIALDWSILPQWFNPRVSHAPKLSIRDFGYSAHQTVTEATPPCWQNCFNPSAAVTIYDSSYGKGVFQISYTLVRYWRENAATAGDAMMLAGSINDYPSRQNIFSQFTFSQNFPNERVSLTIGQYSLYAIDGTLYNNDQQLGFISYALSQNPTATYSSGSLGAYLQVAPTASTSLQIGFQDAYNISGSSIKWSNLTKNRYNFHGFASWAPRCCLGSGQYSVLLYVTRQVPEQMEQTMGWSVNASQHISSKLYVFGRYSGVTGHVFPINRTYSFGMASANLFNRNPQDLFGIACAFNNVHLSASPNTKRKYETVIEGFATIGCGPYLSFAPDFQLYLYPALRPNKQSARVYSVRANLAI.

The signal sequence occupies residues 1 to 22 (MSFRSVLLTALLSLSFTTTMQA).

The protein belongs to the OprB family.

It is found in the cell outer membrane. Facilitates L-arginine uptake, as part of the AaxABC system. The arginine uptake by the bacterium in the macrophage may be a virulence factor against the host innate immune response. This chain is Porin AaxA (aaxA), found in Chlamydia trachomatis serovar D (strain ATCC VR-885 / DSM 19411 / UW-3/Cx).